Consider the following 171-residue polypeptide: MAGAELRAALEQRLAALAIRTEVVEHPEVFTVEEMMPHIQHLKGAHSKNLFLKDKKKKGYWLVTVLHDRQINLNDLAKQLGVGSGNLRFADEAAMLEKLKVGQGCATPLALFCDDGDVKFVLDSAFLEGGHEKVYFHPMTNAATMGLSPEDFLTFVKNTGHDPIILNFDKN.

The protein belongs to the PRORSD1 family.

The protein is Prolyl-tRNA synthetase associated domain-containing protein 1 (PRORSD1) of Bos taurus (Bovine).